Consider the following 102-residue polypeptide: MLKLKLLTSLAVFTTLLFSCGASYALSSCSPGVIKYIRYETDNAKTLVIIKLDSMNNENYTDNPRLLQPLTYAYAVGEKVTLHTESCTSGDHGFASFSLRNK.

The chain is Putative protein p7 (7) from Escherichia coli (Bacteriophage APSE-1).